Reading from the N-terminus, the 1038-residue chain is Fibronectin-binding protein A (1038 aa).

The first 36 residues, 1–36 (MKNNLRYGIRKHKLGAASVFLGTMIVVGMGQDKEAA), serve as a signal peptide directing secretion. Positions 7-18 (YGIRKHKLGAAS) match the YSIRK-G/S signaling motif motif. Residues 37–193 (ASEQKTTTVE…VSEVKGTDVT (157 aa)) are disordered. A ligand-binding A region region spans residues 37–507 (ASEQKTTTVE…SNKADGNGKN (471 aa)). The span at 39–92 (EQKTTTVEENGNSATDNKTSETQTTATNVNHIEETQSYNATVTEQPSNATQVTT) shows a compositional bias: polar residues. Basic and acidic residues predominate over residues 112 to 121 (TVKEEEKPQV). Polar residues predominate over residues 122–164 (KETTQPQDNSGNQRQVDLTPKKVTQNQGTETQVEVAQPRTASE). Over residues 174 to 189 (DVAEAKEASDVSEVKG) the composition is skewed to basic and acidic residues. The interval 189–507 (GTDVTSKVTV…SNKADGNGKN (319 aa)) is fibrinogen/elastin/tropoelastin-binding. Residues 508–868 (GQIIQDNDFE…EGQQTIEEDT (361 aa)) form a fibronectin-binding region. A B-1 repeat occupies 541-570 (ENQDNTPLDIDYHTAIDGEGGYVDGYIETI). A 2 X approximate tandem repeats region spans residues 541-600 (ENQDNTPLDIDYHTAIDGEGGYVDGYIETIEETDSSAIDIDYHTAVDSEVGHVGGYTESS). The B-2 repeat unit spans residues 571 to 600 (EETDSSAIDIDYHTAVDSEVGHVGGYTESS). Disordered regions lie at residues 736 to 804 (LGYE…GGNI), 825 to 976 (IEED…GKVV), and 989 to 1015 (VAPT…NKGM). The D-1 repeat unit spans residues 741 to 778 (GQNSGNQSFEEDTEEDKPKYEQGGNIVDIDFDSVPQIH). Positions 741–898 (GQNSGNQSFE…TPEVPSEPET (158 aa)) are 4 X approximate tandem repeats. The D-2 repeat unit spans residues 779-816 (GQNKGDQSFEEDTEKDKPKYEHGGNIIDIDFDSVPQIH). The D-3 repeat unit spans residues 817 to 855 (GFNKHNEIIEEDTNKDKPNYQFGGHNSVDFEEDTLPKVS). The segment covering 825–834 (IEEDTNKDKP) has biased composition (basic and acidic residues). The D-4 repeat unit spans residues 856–898 (GQNEGQQTIEEDTTPPTPPTPEVPSEPETPMPPTPEVPSEPET). The segment covering 870–958 (PPTPPTPEVP…PAEPGKPVPP (89 aa)) has biased composition (pro residues). WR repeat units follow at residues 899–912 (PTPP…EPET), 913–926 (PTPP…EPET), 927–940 (PTPP…EPET), 941–954 (PTPP…EPGK), and 955–968 (PVPP…KPSK). The interval 899-968 (PTPPTPEVPS…AKEEPKKPSK (70 aa)) is 5 X tandem repeats, Pro-rich (WR). An LPXTG sorting signal motif is present at residues 1002 to 1006 (LPETG). Residue Thr-1005 is modified to Pentaglycyl murein peptidoglycan amidated threonine. Positions 1006 to 1038 (GGEESTNKGMLFGGLFSILGLALLRRNKKNNKA) are cleaved as a propeptide — removed by sortase.

The protein resides in the secreted. It is found in the cell wall. Functionally, promotes bacterial attachment to multiple substrates, such as fibronectin (Fn), fibrinogen (Fg), elastin peptides and tropoelastin. This confers to S.aureus the ability to invade endothelial cells. Promotes adherence to and aggregation of activated platelets. The protein is Fibronectin-binding protein A (fnbA) of Staphylococcus aureus (strain Mu50 / ATCC 700699).